A 37-amino-acid polypeptide reads, in one-letter code: Large ribosomal subunit protein bL36c (37 aa).

The protein belongs to the bacterial ribosomal protein bL36 family.

The protein resides in the plastid. The protein localises to the chloroplast. The polypeptide is Large ribosomal subunit protein bL36c (Nicotiana tomentosiformis (Tobacco)).